Here is a 66-residue protein sequence, read N- to C-terminus: UPF0337 protein pc0632 (66 aa).

The protein belongs to the UPF0337 (CsbD) family.

The polypeptide is UPF0337 protein pc0632 (Protochlamydia amoebophila (strain UWE25)).